The primary structure comprises 543 residues: Chaperonin GroEL (543 aa).

ATP contacts are provided by residues 29-32 (TLGP), 86-90 (DGTTT), Gly-413, 476-478 (NAA), and Asp-492.

This sequence belongs to the chaperonin (HSP60) family. Forms a cylinder of 14 subunits composed of two heptameric rings stacked back-to-back. Interacts with the co-chaperonin GroES.

The protein localises to the cytoplasm. The catalysed reaction is ATP + H2O + a folded polypeptide = ADP + phosphate + an unfolded polypeptide.. Together with its co-chaperonin GroES, plays an essential role in assisting protein folding. The GroEL-GroES system forms a nano-cage that allows encapsulation of the non-native substrate proteins and provides a physical environment optimized to promote and accelerate protein folding. The polypeptide is Chaperonin GroEL (Streptococcus pyogenes serotype M1).